The primary structure comprises 501 residues: Glucose-6-phosphate isomerase (501 aa).

Positions 78-101 (GIANPTENRAAEHSAERGDGAPES) are disordered. The segment covering 86–97 (RAAEHSAERGDG) has biased composition (basic and acidic residues). Catalysis depends on glutamate 333, which acts as the Proton donor. Catalysis depends on residues histidine 364 and lysine 474.

It belongs to the GPI family.

Its subcellular location is the cytoplasm. It catalyses the reaction alpha-D-glucose 6-phosphate = beta-D-fructose 6-phosphate. The protein operates within carbohydrate biosynthesis; gluconeogenesis. It participates in carbohydrate degradation; glycolysis; D-glyceraldehyde 3-phosphate and glycerone phosphate from D-glucose: step 2/4. In terms of biological role, catalyzes the reversible isomerization of glucose-6-phosphate to fructose-6-phosphate. This chain is Glucose-6-phosphate isomerase, found in Sphingopyxis alaskensis (strain DSM 13593 / LMG 18877 / RB2256) (Sphingomonas alaskensis).